The primary structure comprises 61 residues: Statherin (61 aa).

The signal sequence occupies residues M1 to X19. The tract at residues D20 to K25 is hydroxyapatite-binding; inhibits crystal growth. Phosphoserine is present on residues S21 and S22. The interval R37 to Y61 is disordered. The tract at residues R37–Y61 is hydrophobic; inhibits precipitation of calcium phosphate salts. The segment covering P43–Y61 has biased composition (pro residues).

The protein belongs to the histatin/statherin family. Secreted by parotid and submandibular glands.

The protein localises to the secreted. In terms of biological role, salivary protein that stabilizes saliva supersaturated with calcium salts by inhibiting the precipitation of calcium phosphate salts. It also modulates hydroxyapatite crystal formation on the tooth surface. The protein is Statherin (STATH) of Macaca fascicularis (Crab-eating macaque).